Consider the following 86-residue polypeptide: Anti-adapter protein IraP (86 aa).

The stretch at 1-36 forms a coiled coil; that stretch reads MKNLIAELLVKLAEKEEESKELVAQVEALEIVVTAL.

The protein belongs to the IraP family. In terms of assembly, interacts with RssB.

The protein resides in the cytoplasm. Functionally, inhibits RpoS proteolysis by regulating RssB activity, thereby increasing the stability of the sigma stress factor RpoS especially during phosphate starvation, but also in stationary phase and during nitrogen starvation. Its effect on RpoS stability is due to its interaction with RssB, which probably blocks the interaction of RssB with RpoS, and the consequent delivery of the RssB-RpoS complex to the ClpXP protein degradation pathway. The sequence is that of Anti-adapter protein IraP from Cronobacter sakazakii (strain ATCC BAA-894) (Enterobacter sakazakii).